The primary structure comprises 292 residues: 4-diphosphocytidyl-2-C-methyl-D-erythritol kinase (292 aa).

The active site involves K20. An ATP-binding site is contributed by 103 to 113 (PMGGGIGGGSS). D145 is an active-site residue.

Belongs to the GHMP kinase family. IspE subfamily.

It catalyses the reaction 4-CDP-2-C-methyl-D-erythritol + ATP = 4-CDP-2-C-methyl-D-erythritol 2-phosphate + ADP + H(+). Its pathway is isoprenoid biosynthesis; isopentenyl diphosphate biosynthesis via DXP pathway; isopentenyl diphosphate from 1-deoxy-D-xylulose 5-phosphate: step 3/6. Its function is as follows. Catalyzes the phosphorylation of the position 2 hydroxy group of 4-diphosphocytidyl-2C-methyl-D-erythritol. The protein is 4-diphosphocytidyl-2-C-methyl-D-erythritol kinase of Cupriavidus taiwanensis (strain DSM 17343 / BCRC 17206 / CCUG 44338 / CIP 107171 / LMG 19424 / R1) (Ralstonia taiwanensis (strain LMG 19424)).